The chain runs to 623 residues: DNA-directed RNA polymerase subunit beta' (623 aa).

Residues Cys-70, Cys-72, Cys-85, and Cys-88 each contribute to the Zn(2+) site. Mg(2+)-binding residues include Asp-466, Asp-468, and Asp-470.

It belongs to the RNA polymerase beta' chain family. RpoC1 subfamily. In plastids the minimal PEP RNA polymerase catalytic core is composed of four subunits: alpha, beta, beta', and beta''. When a (nuclear-encoded) sigma factor is associated with the core the holoenzyme is formed, which can initiate transcription. Mg(2+) serves as cofactor. Zn(2+) is required as a cofactor.

It is found in the plastid. It localises to the chloroplast. It catalyses the reaction RNA(n) + a ribonucleoside 5'-triphosphate = RNA(n+1) + diphosphate. Its function is as follows. DNA-dependent RNA polymerase catalyzes the transcription of DNA into RNA using the four ribonucleoside triphosphates as substrates. The protein is DNA-directed RNA polymerase subunit beta' of Rhodomonas salina (Cryptomonas salina).